Consider the following 1363-residue polypeptide: DNA-directed RNA polymerase subunit beta (1363 aa).

The protein belongs to the RNA polymerase beta chain family. The RNAP catalytic core consists of 2 alpha, 1 beta, 1 beta' and 1 omega subunit. When a sigma factor is associated with the core the holoenzyme is formed, which can initiate transcription.

It catalyses the reaction RNA(n) + a ribonucleoside 5'-triphosphate = RNA(n+1) + diphosphate. Its function is as follows. DNA-dependent RNA polymerase catalyzes the transcription of DNA into RNA using the four ribonucleoside triphosphates as substrates. The sequence is that of DNA-directed RNA polymerase subunit beta from Pelagibacter ubique (strain HTCC1062).